The chain runs to 484 residues: Glutamyl-tRNA(Gln) amidotransferase subunit A (484 aa).

Residues lysine 77 and serine 152 each act as charge relay system in the active site. Serine 176 serves as the catalytic Acyl-ester intermediate.

It belongs to the amidase family. GatA subfamily. In terms of assembly, heterotrimer of A, B and C subunits.

The enzyme catalyses L-glutamyl-tRNA(Gln) + L-glutamine + ATP + H2O = L-glutaminyl-tRNA(Gln) + L-glutamate + ADP + phosphate + H(+). Its function is as follows. Allows the formation of correctly charged Gln-tRNA(Gln) through the transamidation of misacylated Glu-tRNA(Gln) in organisms which lack glutaminyl-tRNA synthetase. The reaction takes place in the presence of glutamine and ATP through an activated gamma-phospho-Glu-tRNA(Gln). The protein is Glutamyl-tRNA(Gln) amidotransferase subunit A of Pseudomonas aeruginosa (strain ATCC 15692 / DSM 22644 / CIP 104116 / JCM 14847 / LMG 12228 / 1C / PRS 101 / PAO1).